A 190-amino-acid polypeptide reads, in one-letter code: Probable nicotinate-nucleotide adenylyltransferase (190 aa).

The protein belongs to the NadD family.

It catalyses the reaction nicotinate beta-D-ribonucleotide + ATP + H(+) = deamido-NAD(+) + diphosphate. The protein operates within cofactor biosynthesis; NAD(+) biosynthesis; deamido-NAD(+) from nicotinate D-ribonucleotide: step 1/1. Its function is as follows. Catalyzes the reversible adenylation of nicotinate mononucleotide (NaMN) to nicotinic acid adenine dinucleotide (NaAD). This is Probable nicotinate-nucleotide adenylyltransferase from Azobacteroides pseudotrichonymphae genomovar. CFP2.